The sequence spans 122 residues: Large ribosomal subunit protein uL14 (122 aa).

Belongs to the universal ribosomal protein uL14 family. Part of the 50S ribosomal subunit. Forms a cluster with proteins L3 and L19. In the 70S ribosome, L14 and L19 interact and together make contacts with the 16S rRNA in bridges B5 and B8.

In terms of biological role, binds to 23S rRNA. Forms part of two intersubunit bridges in the 70S ribosome. The protein is Large ribosomal subunit protein uL14 of Gemmatimonas aurantiaca (strain DSM 14586 / JCM 11422 / NBRC 100505 / T-27).